The primary structure comprises 248 residues: Sperm-specific protein Don juan (248 aa).

A coiled-coil region spans residues 82 to 147; the sequence is KEGNQDELEN…EKKTKCAKKD (66 aa). Residues 146–200 form a disordered region; that stretch reads KDPCKKKDPCKKKDPCKKKDPCKKKDPCKKKDPCKKKDPCKKKDPCKKKGGDLKK. A run of 8 repeats spans residues 147-152, 153-158, 159-164, 165-170, 171-176, 177-182, 183-188, and 189-194. Residues 147-194 are 8 X 6 AA tandem repeat of D-P-C-K-K-K; it reads DPCKKKDPCKKKDPCKKKDPCKKKDPCKKKDPCKKKDPCKKKDPCKKK. The stretch at 197–244 forms a coiled coil; that stretch reads DLKKKCKKLAEKEKCKKLAKKEKMKKLQKKCKKMAQKEKCKKMAKKDK.

In terms of tissue distribution, expression limited to post-meiotic male germ cells. Expressed in elongated spermatids during individualization and in finally elongated nuclei of spermatids. After completion of nuclear shaping it is no longer expressed in the sperm heads with the onset of individualization.

It localises to the nucleus. The protein localises to the mitochondrion. Its function is as follows. May be involved in the final steps of mitochondrial differentiation within the flagellum. The chain is Sperm-specific protein Don juan (dj) from Drosophila melanogaster (Fruit fly).